Consider the following 323-residue polypeptide: Staphylococcal-like nuclease CAN1 (323 aa).

Gly2 is lipidated: N-myristoyl glycine. Cys11 carries S-palmitoyl cysteine lipidation. Positions 130–306 (NTLPVDTKSV…RQKRVGLWAS (177 aa)) constitute a TNase-like domain. Position 143 (Asp143) interacts with Ca(2+). Arg213 is a catalytic residue. Asp218 contributes to the Ca(2+) binding site. Catalysis depends on residues Glu221 and Arg255.

The protein belongs to the thermonuclease family. Ca(2+) serves as cofactor.

It is found in the cell membrane. Inhibited by Zn(2+). In terms of biological role, enzyme that catalyzes the hydrolysis of both DNA and RNA at the 5' position of the phosphodiester bond. Possesses activity toward the single-stranded DNA, double-stranded DNA and RNA. May be involved in genomic DNA degradation during programmed cell death. This Arabidopsis thaliana (Mouse-ear cress) protein is Staphylococcal-like nuclease CAN1 (CAN1).